The following is a 192-amino-acid chain: Ribosome maturation factor RimM (192 aa).

The region spanning 99 to 186 (ADEYHVSELV…RIEIAPPPGL (88 aa)) is the PRC barrel domain.

The protein belongs to the RimM family. As to quaternary structure, binds ribosomal protein uS19.

The protein resides in the cytoplasm. Functionally, an accessory protein needed during the final step in the assembly of 30S ribosomal subunit, possibly for assembly of the head region. Essential for efficient processing of 16S rRNA. May be needed both before and after RbfA during the maturation of 16S rRNA. It has affinity for free ribosomal 30S subunits but not for 70S ribosomes. This is Ribosome maturation factor RimM from Microcystis aeruginosa (strain NIES-843 / IAM M-2473).